We begin with the raw amino-acid sequence, 560 residues long: Cytosolic purine 5'-nucleotidase (560 aa).

Catalysis depends on Asp-52, which acts as the Nucleophile. Positions 52 and 54 each coordinate IMP. The Mg(2+) site is built by Asp-52 and Asp-54. Catalysis depends on Asp-54, which acts as the Proton donor. Residues Arg-144 and Asn-154 each contribute to the ATP site. Arg-202, Asp-206, Lys-215, Thr-249, Asn-250, Ser-251, and Lys-292 together coordinate IMP. Residue Asp-351 coordinates Mg(2+). Position 418 is a phosphoserine (Ser-418). The ATP site is built by Gln-453 and Arg-456. Ser-502, Ser-511, and Ser-527 each carry phosphoserine. Residues 541 to 560 (PQEITHCHDEDDDEEEEEEE) form a disordered region. A required for tetramer assembly region spans residues 548 to 560 (HDEDDDEEEEEEE). Acidic residues predominate over residues 550–560 (EDDDEEEEEEE).

It belongs to the 5'(3')-deoxyribonucleotidase family. In terms of assembly, homotetramer. Mg(2+) is required as a cofactor.

It is found in the cytoplasm. It localises to the cytosol. The catalysed reaction is a ribonucleoside 5'-phosphate + H2O = a ribonucleoside + phosphate. It carries out the reaction a 2'-deoxyribonucleoside + a ribonucleoside 5'-phosphate = a ribonucleoside + a 2'-deoxyribonucleoside 5'-phosphate. The enzyme catalyses IMP + H2O = inosine + phosphate. It catalyses the reaction GMP + H2O = guanosine + phosphate. The catalysed reaction is dIMP + H2O = 2'-deoxyinosine + phosphate. It carries out the reaction dGMP + H2O = 2'-deoxyguanosine + phosphate. The enzyme catalyses XMP + H2O = xanthosine + phosphate. It catalyses the reaction inosine + GMP = guanosine + IMP. The catalysed reaction is dGMP + inosine = 2'-deoxyguanosine + IMP. It carries out the reaction dIMP + inosine = 2'-deoxyinosine + IMP. The enzyme catalyses inosine + UMP = uridine + IMP. It catalyses the reaction inosine + CMP = cytidine + IMP. The catalysed reaction is inosine + AMP = IMP + adenosine. With respect to regulation, allosterically activated by various compounds including ATP, 2,3-BPG/2,3-Bisphosphoglyceric acid and Ap4A/P1,P4-bis(5'-adenosyl) tetraphosphate. Binding of an allosteric activator is a prerequisiste to magnesium and substrate binding. Inhibited by inorganic phosphate. In terms of biological role, broad specificity cytosolic 5'-nucleotidase that catalyzes the dephosphorylation of 6-hydroxypurine nucleoside 5'-monophosphates. In addition, possesses a phosphotransferase activity by which it can transfer a phosphate from a donor nucleoside monophosphate to an acceptor nucleoside, preferably inosine, deoxyinosine and guanosine. Has the highest activities for IMP and GMP followed by dIMP, dGMP and XMP. Could also catalyze the transfer of phosphates from pyrimidine monophosphates but with lower efficiency. Through these activities regulates the purine nucleoside/nucleotide pools within the cell. The chain is Cytosolic purine 5'-nucleotidase from Rattus norvegicus (Rat).